A 795-amino-acid chain; its full sequence is Phenylalanine--tRNA ligase beta subunit (795 aa).

The tRNA-binding domain occupies Ala-39 to Arg-148. The region spanning Pro-401–Ala-476 is the B5 domain. Asp-454, Asp-460, Glu-463, and Glu-464 together coordinate Mg(2+). The region spanning Ser-701–Arg-794 is the FDX-ACB domain.

It belongs to the phenylalanyl-tRNA synthetase beta subunit family. Type 1 subfamily. In terms of assembly, tetramer of two alpha and two beta subunits. Requires Mg(2+) as cofactor.

Its subcellular location is the cytoplasm. It catalyses the reaction tRNA(Phe) + L-phenylalanine + ATP = L-phenylalanyl-tRNA(Phe) + AMP + diphosphate + H(+). The polypeptide is Phenylalanine--tRNA ligase beta subunit (Idiomarina loihiensis (strain ATCC BAA-735 / DSM 15497 / L2-TR)).